The chain runs to 442 residues: O-acetyl-L-homoserine sulfhydrylase (442 aa).

Residues 1-32 (MVGPSGESMPRNFKPETIALHGGQEPDPTTTS) are disordered. Lys216 carries the post-translational modification N6-(pyridoxal phosphate)lysine.

Belongs to the trans-sulfuration enzymes family. Pyridoxal 5'-phosphate serves as cofactor.

It carries out the reaction O-acetyl-L-homoserine + hydrogen sulfide = L-homocysteine + acetate. It participates in amino-acid biosynthesis; L-methionine biosynthesis via de novo pathway; L-homocysteine from O-acetyl-L-homoserine: step 1/1. With respect to regulation, feedback inhibited at very high concentrations of methionine or S-adenosylmethionine. Catalyzes the conversion of O-acetyl-L-homoserine (OAH) into homocysteine in the methionine biosynthesis pathway. Can also use O-succinyl-homoserine (OSH), although at low efficiency. The polypeptide is O-acetyl-L-homoserine sulfhydrylase (Leptospira meyeri).